Reading from the N-terminus, the 430-residue chain is von Willebrand factor (430 aa).

An N-linked (GlcNAc...) asparagine glycan is attached at Asn6. Cys9 and Cys12 are oxidised to a cystine. Residues Thr23, Thr30, and Thr31 are each glycosylated (O-linked (GalNAc...) threonine). The cysteines at positions 47 and 233 are disulfide-linked. A VWFA 1; binding site for platelet glycoprotein Ib domain is found at 52-228 (DLVFLLDGSY…DELEQRRDEI (177 aa)). Residue Thr252 is glycosylated (O-linked (GalNAc...) threonine). A glycan (O-linked (GalNAc...) serine) is linked at Ser261. The VWFA 2 domain occupies 273-430 (DVVFVLEASD…ITPIFIQDFE (158 aa)). N-linked (GlcNAc...) asparagine glycans are attached at residues Asn290 and Asn349.

As to quaternary structure, multimeric. Interacts with F8. In terms of processing, N- and O-glycosylated. As to expression, plasma.

It localises to the secreted. The protein resides in the extracellular space. It is found in the extracellular matrix. Its function is as follows. Important in the maintenance of hemostasis, it promotes adhesion of platelets to the sites of vascular injury by forming a molecular bridge between sub-endothelial collagen matrix and platelet-surface receptor complex GPIb-IX-V. Also acts as a chaperone for coagulation factor VIII, delivering it to the site of injury, stabilizing its heterodimeric structure and protecting it from premature clearance from plasma. The polypeptide is von Willebrand factor (Rattus norvegicus (Rat)).